The chain runs to 301 residues: Ornithine carbamoyltransferase (301 aa).

Carbamoyl phosphate contacts are provided by residues 47–50 (STRT), Gln74, Arg98, and 125–128 (HPCQ). L-ornithine is bound by residues Asn156, Asp220, and 224-225 (SM). Residues 260–261 (CL) and Arg288 each bind carbamoyl phosphate.

It belongs to the aspartate/ornithine carbamoyltransferase superfamily. OTCase family.

It localises to the cytoplasm. It catalyses the reaction carbamoyl phosphate + L-ornithine = L-citrulline + phosphate + H(+). Its pathway is amino-acid biosynthesis; L-arginine biosynthesis; L-arginine from L-ornithine and carbamoyl phosphate: step 1/3. Reversibly catalyzes the transfer of the carbamoyl group from carbamoyl phosphate (CP) to the N(epsilon) atom of ornithine (ORN) to produce L-citrulline. The protein is Ornithine carbamoyltransferase of Methanobrevibacter smithii (strain ATCC 35061 / DSM 861 / OCM 144 / PS).